The chain runs to 464 residues: Probable pectin lyase F (464 aa).

Positions 1–20 (MAIIRSVIAATALLGAAVNA) are cleaved as a signal peptide. The cysteines at positions 80 and 103 are disulfide-linked. Asparagine 126 carries N-linked (GlcNAc...) asparagine glycosylation. Residue arginine 252 is part of the active site. Cysteine 319 and cysteine 327 are oxidised to a cystine. The interval 424 to 464 (EHEVSTPAVPTPTPVPSSVGSHGSTAGSSHPPAFSRTSFES) is disordered. The segment covering 439–448 (PSSVGSHGST) has biased composition (low complexity).

The protein belongs to the polysaccharide lyase 1 family.

It is found in the secreted. The enzyme catalyses Eliminative cleavage of (1-&gt;4)-alpha-D-galacturonan methyl ester to give oligosaccharides with 4-deoxy-6-O-methyl-alpha-D-galact-4-enuronosyl groups at their non-reducing ends.. In terms of biological role, pectinolytic enzymes consist of four classes of enzymes: pectin lyase, polygalacturonase, pectin methylesterase and rhamnogalacturonase. Among pectinolytic enzymes, pectin lyase is the most important in depolymerization of pectin, since it cleaves internal glycosidic bonds of highly methylated pectins. This is Probable pectin lyase F (pelF) from Emericella nidulans (strain FGSC A4 / ATCC 38163 / CBS 112.46 / NRRL 194 / M139) (Aspergillus nidulans).